The following is a 194-amino-acid chain: Mitochondrial import inner membrane translocase subunit Tim22 (194 aa).

2 cysteine pairs are disulfide-bonded: Cys-69/Cys-141 and Cys-160/Cys-179. Helical transmembrane passes span 74-94, 123-143, and 170-190; these read ALACVGGFVLGGAFGVFTAGI, MSYAKNFAIVGAMFSCTECLI, and AGLKAGAIGCGGFAAFSAAID.

This sequence belongs to the Tim17/Tim22/Tim23 family. As to quaternary structure, component of the TIM22 complex, whose core is composed of TIMM22, associated with peripheral protein FXC1/TIMM10B and the 70 kDa heterohexamer. In most cases, the 70 kDa complex is composed of TIMM9 and TIMM10 (TIMM10A or TIMM10B). A small fraction of the 70 kDa complex is composed of TIMM8 (TIMM8A/DDP1 or TIMM8B/DDP2) and TIMM13. The TIM22 complex also contains AGK and TIMM29. Interacts directly with TIMM9, TIMM10A and FXC1/TIMM10B. Interacts (when oxidized) with TIMM29; interaction is direct. In terms of processing, disulfide bonds promote efficient assembly of the TIM22 complex.

Its subcellular location is the mitochondrion inner membrane. Essential core component of the TIM22 complex, a complex that mediates the import and insertion of multi-pass transmembrane proteins into the mitochondrial inner membrane. In the TIM22 complex, it constitutes the voltage-activated and signal-gated channel. Forms a twin-pore translocase that uses the membrane potential as external driving force in 2 voltage-dependent steps. This is Mitochondrial import inner membrane translocase subunit Tim22 (TIMM22) from Homo sapiens (Human).